The following is a 438-amino-acid chain: Protein ROOT INITIATION DEFECTIVE 3 (438 aa).

WD repeat units follow at residues 36–74, 76–115, 118–157, 171–212, 214–253, and 261–300; these read AHGL…AEVK, YPVE…LLKK, GHYR…DDFQ, EHTM…LLKN, IFPS…EYGT, and EKGK…HVRT. Residues 394–434 are a coiled coil; sequence AATEMEMERLKLEYKRSLQMNEQWQKNYENLLQVVMEEEQI.

Its function is as follows. Involved in meristem development. Acts as a negative regulator of the CUC-STM pathway in shoot apical meristem (SAM) neo-formation. In Arabidopsis thaliana (Mouse-ear cress), this protein is Protein ROOT INITIATION DEFECTIVE 3 (RID3).